A 426-amino-acid chain; its full sequence is Histidine--tRNA ligase (426 aa).

It belongs to the class-II aminoacyl-tRNA synthetase family. Homodimer.

It localises to the cytoplasm. The catalysed reaction is tRNA(His) + L-histidine + ATP = L-histidyl-tRNA(His) + AMP + diphosphate + H(+). The polypeptide is Histidine--tRNA ligase (Streptococcus equi subsp. zooepidemicus (strain H70)).